Here is a 362-residue protein sequence, read N- to C-terminus: MTQELSFQKFIEQSDLLGELKYDFNEKDEFRHTETQRPFVFNYYENVLEKNSKRYQALGHLLEQYIYELLEKVCKLEKVYIPPEADKEEPRSFFFMSEKALTNHHSALLILLQDHGVFRAGQWSQQAIIHHGLQHGSQIPCIQMALQAHYDVIVLNPNDNFVEPKVEKEWKGLLTQNIESSSLKMVQGGSFFSLQHPPKCIPKRCSNTPEEHTAYIWDYFISKTEGKDIAFIVHGYGGLVFMDLLVRRRWEVMSKVYAVALIDSEHHVGHQLGSDVQLLAWIKHHCREWVTSPKPLDKPAATVFKKEFPMVSAGTEKYILAPSSSLQSIFKYFKKALKARTTINFSRMPIVTRSSTKRKQSA.

A helical membrane pass occupies residues 229–245 (IAFIVHGYGGLVFMDLL).

It belongs to the ARB2 family.

The protein localises to the membrane. This Homo sapiens (Human) protein is Putative protein ARB2BP.